The chain runs to 539 residues: Protein pim1 (539 aa).

Positions methionine 1–valine 53 are disordered. Over residues threonine 11 to lysine 33 the composition is skewed to basic and acidic residues. The segment covering asparagine 34–lysine 43 has biased composition (basic residues). RCC1 repeat units follow at residues arginine 70–histidine 125, glycine 127–aspartate 191, asparagine 192–threonine 243, threonine 244–asparagine 296, glycine 298–glutamate 353, aspartate 354–serine 417, and glycine 419–isoleucine 472. Positions glutamate 478–alanine 539 are disordered. Positions serine 486–aspartate 504 are enriched in basic and acidic residues. Residues valine 514–serine 525 are compositionally biased toward polar residues.

In terms of assembly, oligomer of dis3, pim1 and spi1. Interacts with ned1.

It is found in the nucleus. In terms of biological role, promotes the exchange of Ran(spi1)-bound GDP by GTP. Involved in the control of mitosis. Regulates a variety of nuclear events, including mitotic check-point, chromosome decondensation and mRNA processing/transport. The protein is Protein pim1 (pim1) of Schizosaccharomyces pombe (strain 972 / ATCC 24843) (Fission yeast).